We begin with the raw amino-acid sequence, 779 residues long: Vezatin (779 aa).

2 helical membrane-spanning segments follow: residues 139–159 (LATPNIWDLSMLFAFISLLVM) and 162–182 (TWWIVSSWLVWGVILFVYLVI). Positions 430 to 462 (VRSLQLHLKALLNEVIILEDELEKLVCTKETQE) form a coiled coil. Disordered regions lie at residues 618–719 (PVDP…DSLQ) and 757–779 (EQTFGGEEEEQIIEENKNEIEEK). The span at 625 to 634 (ISNSEPSMNS) shows a compositional bias: polar residues. Residues 638 to 649 (KVSKNDTEEESN) show a composition bias toward basic and acidic residues. Over residues 706 to 719 (GLTTAPPTPRDSLQ) the composition is skewed to polar residues. The span at 770 to 779 (EENKNEIEEK) shows a compositional bias: basic and acidic residues.

This sequence belongs to the vezatin family. As to quaternary structure, interacts with USH2A (via the cytoplasmic region); the interaction associates VEZT with the USH2 complex at the stereocilia base. Interacts with myosin MYO7A and the cadherin-catenins complex.

The protein resides in the cell membrane. The protein localises to the cell projection. Its subcellular location is the stereocilium membrane. It localises to the cell junction. It is found in the adherens junction. The protein resides in the nucleus. The protein localises to the cytoplasmic vesicle. Its subcellular location is the secretory vesicle. It localises to the acrosome. In terms of biological role, plays a pivotal role in the establishment of adherens junctions and their maintenance in adult life. Required for morphogenesis of the preimplantation embryo, and for the implantation process. Its function is as follows. (Microbial infection) In case of Listeria infection, promotes bacterial internalization by participating in myosin VIIa recruitment to the entry site. This is Vezatin (VEZT) from Homo sapiens (Human).